Reading from the N-terminus, the 337-residue chain is tRNA N6-adenosine threonylcarbamoyltransferase (337 aa).

2 residues coordinate Fe cation: His111 and His115. Residues 134-138, Asp167, Gly180, and Asn272 contribute to the substrate site; that span reads LVSGG. Asp300 is a binding site for Fe cation.

Belongs to the KAE1 / TsaD family. The cofactor is Fe(2+).

The protein localises to the cytoplasm. The catalysed reaction is L-threonylcarbamoyladenylate + adenosine(37) in tRNA = N(6)-L-threonylcarbamoyladenosine(37) in tRNA + AMP + H(+). Functionally, required for the formation of a threonylcarbamoyl group on adenosine at position 37 (t(6)A37) in tRNAs that read codons beginning with adenine. Is involved in the transfer of the threonylcarbamoyl moiety of threonylcarbamoyl-AMP (TC-AMP) to the N6 group of A37, together with TsaE and TsaB. TsaD likely plays a direct catalytic role in this reaction. This Aeromonas hydrophila subsp. hydrophila (strain ATCC 7966 / DSM 30187 / BCRC 13018 / CCUG 14551 / JCM 1027 / KCTC 2358 / NCIMB 9240 / NCTC 8049) protein is tRNA N6-adenosine threonylcarbamoyltransferase.